The primary structure comprises 548 residues: Eukaryotic translation initiation factor 3 subunit D (548 aa).

Position 53 is an N6-acetyllysine (Lys-53). At Ser-161 the chain carries Phosphoserine. Positions 285–299 are RNA gate; it reads DFDLPTVSETANEPP. 2 disordered regions span residues 288 to 309 and 523 to 548; these read LPTV…FNSP and PDGT…EEET. Over residues 291 to 309 the composition is skewed to polar residues; sequence VSETANEPPQDEGNSFNSP. Ser-528 and Ser-529 each carry phosphoserine. Residues 529 to 548 show a composition bias toward acidic residues; sequence SDEDEEEEEEEEEEEEEEET.

The protein belongs to the eIF-3 subunit D family. As to quaternary structure, component of the eukaryotic translation initiation factor 3 (eIF-3) complex, which is composed of 13 subunits: EIF3A, EIF3B, EIF3C, EIF3D, EIF3E, EIF3F, EIF3G, EIF3H, EIF3I, EIF3J, EIF3K, EIF3L and EIF3M. The eIF-3 complex appears to include 3 stable modules: module A is composed of EIF3A, EIF3B, EIF3G and EIF3I; module B is composed of EIF3F, EIF3H, and EIF3M; and module C is composed of EIF3C, EIF3D, EIF3E, EIF3K and EIF3L. EIF3C of module C binds EIF3B of module A and EIF3H of module B, thereby linking the three modules. EIF3J is a labile subunit that binds to the eIF-3 complex via EIF3B. The eIF-3 complex interacts with RPS6KB1 under conditions of nutrient depletion. Mitogenic stimulation leads to binding and activation of a complex composed of MTOR and RPTOR, leading to phosphorylation and release of RPS6KB1 and binding of EIF4B to eIF-3.

Its subcellular location is the cytoplasm. Its function is as follows. mRNA cap-binding component of the eukaryotic translation initiation factor 3 (eIF-3) complex, a complex required for several steps in the initiation of protein synthesis of a specialized repertoire of mRNAs. The eIF-3 complex associates with the 40S ribosome and facilitates the recruitment of eIF-1, eIF-1A, eIF-2:GTP:methionyl-tRNAi and eIF-5 to form the 43S pre-initiation complex (43S PIC). The eIF-3 complex stimulates mRNA recruitment to the 43S PIC and scanning of the mRNA for AUG recognition. The eIF-3 complex is also required for disassembly and recycling of post-termination ribosomal complexes and subsequently prevents premature joining of the 40S and 60S ribosomal subunits prior to initiation. The eIF-3 complex specifically targets and initiates translation of a subset of mRNAs involved in cell proliferation, including cell cycling, differentiation and apoptosis, and uses different modes of RNA stem-loop binding to exert either translational activation or repression. In the eIF-3 complex, EIF3D specifically recognizes and binds the 7-methylguanosine cap of a subset of mRNAs. The protein is Eukaryotic translation initiation factor 3 subunit D of Pongo abelii (Sumatran orangutan).